Consider the following 197-residue polypeptide: Probable S-adenosylmethionine-dependent methyltransferase MJ0882 (197 aa).

S-adenosyl-L-methionine is bound by residues 63 to 67, D84, and N129; that span reads GCGYG. 129–132 provides a ligand contact to substrate; the sequence is NPPI.

This sequence belongs to the methyltransferase superfamily.

In terms of biological role, probable methyltransferase that uses S-adenosylmethionine as the methyl donor. Binds neither NAD nor NADP in vitro. The polypeptide is Probable S-adenosylmethionine-dependent methyltransferase MJ0882 (Methanocaldococcus jannaschii (strain ATCC 43067 / DSM 2661 / JAL-1 / JCM 10045 / NBRC 100440) (Methanococcus jannaschii)).